The chain runs to 232 residues: Flagellar L-ring protein (232 aa).

The N-terminal stretch at 1 to 21 (MQKNAAHTYAISSLLVLSLTG) is a signal peptide. Cys-22 is lipidated: N-palmitoyl cysteine. Residue Cys-22 is the site of S-diacylglycerol cysteine attachment.

Belongs to the FlgH family. As to quaternary structure, the basal body constitutes a major portion of the flagellar organelle and consists of four rings (L,P,S, and M) mounted on a central rod.

It is found in the cell outer membrane. The protein resides in the bacterial flagellum basal body. Functionally, assembles around the rod to form the L-ring and probably protects the motor/basal body from shearing forces during rotation. The chain is Flagellar L-ring protein (flgH) from Shigella flexneri.